A 1324-amino-acid chain; its full sequence is Structural maintenance of chromosomes protein 4 (1324 aa).

Residues M1 to E24 are disordered. T19 is subject to Phosphothreonine; by CDC2. Residue G155–S162 coordinates ATP. Coiled-coil stretches lie at residues Q310 to E337 and N370 to L628. Positions N651–A764 constitute an SMC hinge domain. Coiled coils occupy residues Y825 to L1077 and L1297 to D1324.

This sequence belongs to the SMC family. SMC4 subfamily. In terms of assembly, forms a heterodimer with cut14/smc2. Component of the condensin complex, which contains the smc2 and smc4 heterodimer, and three non smc subunits that probably regulate the complex: cnd1, cnd2 and cnd3. Interacts with C1739.07. In terms of processing, phosphorylated by CDC2 on Thr-19 at metaphase.

It localises to the nucleus. The protein resides in the cytoplasm. The protein localises to the chromosome. Functionally, central component of the condensin complex, a complex required for conversion of interphase chromatin into mitotic-like condense chromosomes. The condensin complex probably introduces positive supercoils into relaxed DNA in the presence of type I topoisomerases and converts nicked DNA into positive knotted forms in the presence of type II topoisomerases. This is Structural maintenance of chromosomes protein 4 (cut3) from Schizosaccharomyces pombe (strain 972 / ATCC 24843) (Fission yeast).